A 471-amino-acid polypeptide reads, in one-letter code: Tryptophanase (471 aa).

Residues Lys5, Lys115, and Lys156 each carry the N6-acetyllysine modification. Lys270 is subject to N6-(pyridoxal phosphate)lysine. Lys450 carries the post-translational modification N6-acetyllysine.

The protein belongs to the beta-eliminating lyase family. As to quaternary structure, homotetramer. Pyridoxal 5'-phosphate serves as cofactor.

The catalysed reaction is L-tryptophan + H2O = indole + pyruvate + NH4(+). The protein operates within amino-acid degradation; L-tryptophan degradation via pyruvate pathway; indole and pyruvate from L-tryptophan: step 1/1. In Shigella boydii serotype 18 (strain CDC 3083-94 / BS512), this protein is Tryptophanase.